The following is an 872-amino-acid chain: Alanine--tRNA ligase (872 aa).

Positions 567, 571, 669, and 673 each coordinate Zn(2+).

Belongs to the class-II aminoacyl-tRNA synthetase family. Requires Zn(2+) as cofactor.

It is found in the cytoplasm. The catalysed reaction is tRNA(Ala) + L-alanine + ATP = L-alanyl-tRNA(Ala) + AMP + diphosphate. Functionally, catalyzes the attachment of alanine to tRNA(Ala) in a two-step reaction: alanine is first activated by ATP to form Ala-AMP and then transferred to the acceptor end of tRNA(Ala). Also edits incorrectly charged Ser-tRNA(Ala) and Gly-tRNA(Ala) via its editing domain. The polypeptide is Alanine--tRNA ligase (Streptococcus thermophilus (strain CNRZ 1066)).